The primary structure comprises 265 residues: Short-chain dehydrogenase/reductase phqE (265 aa).

10 residues coordinate NADP(+): Thr23, Ser24, Ile26, Ser46, Asn47, Lys50, Asp76, Arg131, Val203, and Thr205. A helical membrane pass occupies residues 25 to 45 (GIGFAVCAAALGHGAIVTIVG).

This sequence belongs to the short-chain dehydrogenases/reductases (SDR) family. NADP(+) serves as cofactor.

Its subcellular location is the membrane. It functions in the pathway alkaloid biosynthesis. In terms of biological role, short-chain dehydrogenase/reductase; part of the gene cluster that mediates the biosynthesis of paraherquamide, a fungal indole alkaloid that belongs to a family of natural products containing a characteristic bicyclo[2.2.2]diazaoctane core. The first steps in the biosynthesis of paraherquamide is the production of the beta-methyl-proline precursor from L-isoleucine. They require oxidation of a terminally hydroxylated L-isoleucine to the corresponding aldehyde by enzymes which have still to be identified. Spontaneous cyclization and dehydration would yield the 4-methyl pyrolline-5-carboxylic acid, which is then reduced by the pyrroline-5-carboxylate reductase phqD leading to the beta-methyl-proline precursor. The next step of paraherquamide biosynthesis involves coupling of beta-methyl-proline and L-tryptophan by the bimodular NRPS phqB, to produce a monooxopiperazine intermediate. The reductase (R) domain of phqB utilizes NADPH for hydride transfer to reduce the thioester bond of the T domain-tethered linear dipeptide to a hemithioaminal intermediate, which spontaneously cleaves the C-S bond to release the aldehyde product. This compound undergoes spontaneous cyclization and dehydration to give a dienamine which is reverse prenylated at C-2 by the reverse prenyltransferase phqJ. The other prenyltransferase present in the cluster, phqI may be a redundant gene in the pathway. During biosynthetic assembly, the key step to produce the polycyclic core is catalyzed by the bifunctional reductase and intramolecular [4+2] Diels-Alderase, phqE, resulting in formation of the [2.2.2] diazaoctane intermediate preparaherquamide. Following formation of preparaherquamide, an indole 2,3-epoxidation-initiated pinacol-like rearrangement is catalyzed by the phqK FAD-dependent monooxygenase. The prenyltransferase phqA, the cytochrome P450 monooxygenase phqL, and the FAD-linked oxidoreductase phqH (or the cytochrome P450 monooxygenase phqM), are proposed to be involved in the formation of the pyran ring. The FAD-dependent monooxygenase phqK is likely responsible for generation of the spiro-oxindole, and the N-methylation is likely mediated by the phqN methyltransferase leading to the isolable natural product paraherquamide F. However, the order of these biosynthetic steps has still to be determined. In late-stage paraherquamide biosynthesis, the third P450 monooxygenase, phqO, is probably responsible for the C-14 hydroxylation, transforming paraherquamide F to paraherquamide G, and paraherquamide E to the final product paraherquamide A. The expansion from the 6-membered ring pyran (in paraherquamides F and G) to the 7-membered dioxepin ring (in paraherquamides A and E) represents a poorly understood but intriguing process that probably involves the 2-oxoglutarate-dependent dioxygenase phqC. Finally, the remaining members of the paraherquamide cluster, including phqI as well as phqM (or phqH), do not have a clearly prescribed role and appear to be redundant. The protein is Short-chain dehydrogenase/reductase phqE of Penicillium fellutanum.